We begin with the raw amino-acid sequence, 668 residues long: mRNA cap guanine-N(7) methyltransferase (668 aa).

The segment covering 1 to 19 has biased composition (basic and acidic residues); that stretch reads MYDPARDSWEERDGDEARS. The interval 1 to 281 is disordered; the sequence is MYDPARDSWE…RAQVEEAMRA (281 aa). Polar residues predominate over residues 44-65; the sequence is GENNNTTDLQQHPDPSSKTTAS. A compositionally biased stretch (low complexity) spans 73-88; the sequence is SQPAQPTTQTPPSVST. Positions 100 to 129 are enriched in polar residues; the sequence is KASNPQSLTSTAQNQLNKSNTTMENTSGSA. Residues 133–142 are compositionally biased toward basic and acidic residues; the sequence is PRADPSDKPN. Positions 148-157 are enriched in polar residues; the sequence is ASPTDQNGSQ. Basic and acidic residues predominate over residues 257–279; sequence LVDRETLRRRQEERERAQVEEAM. In terms of domain architecture, mRNA cap 0 methyltransferase spans 310 to 668; it reads SKIKGLRSFN…FYHAFCFYKV (359 aa). 319–320 provides a ligand contact to mRNA; sequence NN. S-adenosyl-L-methionine-binding positions include lysine 323, glycine 366, aspartate 390, aspartate 428, 471 to 473, and tyrosine 476; that span reads MFT. Positions 524–547 are disordered; the sequence is ARQAQAKKEKSDEAPEDGEVEEDD. The segment covering 537 to 547 has biased composition (acidic residues); sequence APEDGEVEEDD.

This sequence belongs to the class I-like SAM-binding methyltransferase superfamily. mRNA cap 0 methyltransferase family.

It localises to the nucleus. The catalysed reaction is a 5'-end (5'-triphosphoguanosine)-ribonucleoside in mRNA + S-adenosyl-L-methionine = a 5'-end (N(7)-methyl 5'-triphosphoguanosine)-ribonucleoside in mRNA + S-adenosyl-L-homocysteine. Its function is as follows. Responsible for methylating the 5'-cap structure of mRNAs. This is mRNA cap guanine-N(7) methyltransferase (abd1) from Aspergillus fumigatus (strain ATCC MYA-4609 / CBS 101355 / FGSC A1100 / Af293) (Neosartorya fumigata).